A 225-amino-acid chain; its full sequence is Orotate phosphoribosyltransferase (225 aa).

Residues arginine 107, lysine 108, lysine 111, and 133 to 141 (EDLTTDGGS) each bind 5-phospho-alpha-D-ribose 1-diphosphate. Residue threonine 137 coordinates orotate.

Belongs to the purine/pyrimidine phosphoribosyltransferase family. PyrE subfamily. Homodimer. Mg(2+) serves as cofactor.

The enzyme catalyses orotidine 5'-phosphate + diphosphate = orotate + 5-phospho-alpha-D-ribose 1-diphosphate. Its pathway is pyrimidine metabolism; UMP biosynthesis via de novo pathway; UMP from orotate: step 1/2. Its function is as follows. Catalyzes the transfer of a ribosyl phosphate group from 5-phosphoribose 1-diphosphate to orotate, leading to the formation of orotidine monophosphate (OMP). The sequence is that of Orotate phosphoribosyltransferase from Roseobacter denitrificans (strain ATCC 33942 / OCh 114) (Erythrobacter sp. (strain OCh 114)).